The chain runs to 239 residues: Probable 2-phosphosulfolactate phosphatase (239 aa).

Belongs to the ComB family. It depends on Mg(2+) as a cofactor.

The catalysed reaction is (2R)-O-phospho-3-sulfolactate + H2O = (2R)-3-sulfolactate + phosphate. The sequence is that of Probable 2-phosphosulfolactate phosphatase from Clostridium botulinum (strain Okra / Type B1).